Consider the following 263-residue polypeptide: 5'-nucleotidase SurE (263 aa).

4 residues coordinate a divalent metal cation: Asp-10, Asp-11, Ser-41, and Asn-95.

It belongs to the SurE nucleotidase family. A divalent metal cation is required as a cofactor.

It is found in the cytoplasm. The catalysed reaction is a ribonucleoside 5'-phosphate + H2O = a ribonucleoside + phosphate. Its function is as follows. Nucleotidase that shows phosphatase activity on nucleoside 5'-monophosphates. The polypeptide is 5'-nucleotidase SurE (Methanoculleus marisnigri (strain ATCC 35101 / DSM 1498 / JR1)).